Here is a 314-residue protein sequence, read N- to C-terminus: Ribonucleoside-diphosphate reductase small subunit (314 aa).

Fe cation contacts are provided by aspartate 73, glutamate 103, and histidine 106. Residue tyrosine 110 is part of the active site. The chain crosses the membrane as a helical span at residues 160–180 (VLMILIEGIFFSSSFAAIAYL). Fe cation contacts are provided by glutamate 166, glutamate 200, and histidine 203.

This sequence belongs to the ribonucleoside diphosphate reductase small chain family. As to quaternary structure, heterotetramer composed of a homodimer of the large subunit (R1) and a homodimer of the small subunit (R2). Larger multisubunit protein complex are also active, composed of (R1)n(R2)n. The cofactor is Fe cation.

It is found in the host membrane. The enzyme catalyses a 2'-deoxyribonucleoside 5'-diphosphate + [thioredoxin]-disulfide + H2O = a ribonucleoside 5'-diphosphate + [thioredoxin]-dithiol. Its function is as follows. Ribonucleoside-diphosphate reductase holoenzyme provides the precursors necessary for viral DNA synthesis. Allows virus growth in non-dividing cells, as well as reactivation from latency in infected hosts. Catalyzes the biosynthesis of deoxyribonucleotides from the corresponding ribonucleotides. The chain is Ribonucleoside-diphosphate reductase small subunit from Bovine herpesvirus 1.1 (strain Cooper) (BoHV-1).